A 217-amino-acid chain; its full sequence is 3,4-dihydroxy-2-butanone 4-phosphate synthase (217 aa).

D-ribulose 5-phosphate-binding positions include 37–38 (RE), Asp-42, 150–154 (RGGHT), and Glu-174. Glu-38 serves as a coordination point for Mg(2+). Position 153 (His-153) interacts with Mg(2+).

Belongs to the DHBP synthase family. As to quaternary structure, homodimer. Requires Mg(2+) as cofactor. The cofactor is Mn(2+).

It catalyses the reaction D-ribulose 5-phosphate = (2S)-2-hydroxy-3-oxobutyl phosphate + formate + H(+). It participates in cofactor biosynthesis; riboflavin biosynthesis; 2-hydroxy-3-oxobutyl phosphate from D-ribulose 5-phosphate: step 1/1. In terms of biological role, catalyzes the conversion of D-ribulose 5-phosphate to formate and 3,4-dihydroxy-2-butanone 4-phosphate. The protein is 3,4-dihydroxy-2-butanone 4-phosphate synthase of Salmonella heidelberg (strain SL476).